A 309-amino-acid chain; its full sequence is Malate dehydrogenase (309 aa).

NAD(+)-binding positions include Gly8–Gly13 and Asp33. The substrate site is built by Arg82 and Arg88. Residues Asn95 and Val118–Asn120 contribute to the NAD(+) site. 2 residues coordinate substrate: Asn120 and Arg151. His175 (proton acceptor) is an active-site residue.

It belongs to the LDH/MDH superfamily. MDH type 3 family.

It catalyses the reaction (S)-malate + NAD(+) = oxaloacetate + NADH + H(+). Its function is as follows. Catalyzes the reversible oxidation of malate to oxaloacetate. In Pseudomonas putida (strain GB-1), this protein is Malate dehydrogenase.